A 289-amino-acid chain; its full sequence is 3-methyl-2-oxobutanoate hydroxymethyltransferase (289 aa).

The span at 1 to 15 (MSTTFKLDTSTSRAN) shows a compositional bias: polar residues. The tract at residues 1–21 (MSTTFKLDTSTSRANPTPAPM) is disordered. Residues aspartate 67 and aspartate 106 each contribute to the Mg(2+) site. 3-methyl-2-oxobutanoate-binding positions include 67-68 (DS), aspartate 106, and lysine 136. Glutamate 138 lines the Mg(2+) pocket. The Proton acceptor role is filled by glutamate 205.

Belongs to the PanB family. As to quaternary structure, homodecamer; pentamer of dimers. Mg(2+) is required as a cofactor.

The protein localises to the cytoplasm. The enzyme catalyses 3-methyl-2-oxobutanoate + (6R)-5,10-methylene-5,6,7,8-tetrahydrofolate + H2O = 2-dehydropantoate + (6S)-5,6,7,8-tetrahydrofolate. Its pathway is cofactor biosynthesis; (R)-pantothenate biosynthesis; (R)-pantoate from 3-methyl-2-oxobutanoate: step 1/2. Its function is as follows. Catalyzes the reversible reaction in which hydroxymethyl group from 5,10-methylenetetrahydrofolate is transferred onto alpha-ketoisovalerate to form ketopantoate. In Erythrobacter litoralis (strain HTCC2594), this protein is 3-methyl-2-oxobutanoate hydroxymethyltransferase.